The primary structure comprises 129 residues: Protein 2B* (129 aa).

Disordered regions lie at residues 1–28 (PFTF…NPTA) and 91–129 (DCRD…RNSS). Polar residues predominate over residues 14 to 28 (DSRSGSVINGSNPTA). Residues 99–113 (DASGPLDAALLGSLD) show a composition bias toward low complexity. Basic and acidic residues predominate over residues 114–129 (SSRDHKPDKPVRRNSS).

Belongs to the encephalomyocarditis virus protein 2B* family.

In Homo sapiens (Human), this protein is Protein 2B*.